The chain runs to 59 residues: Toxin TxpA (59 aa).

Residues 7–27 (LMVMIGFANLIGGIMTWVISL) traverse the membrane as a helical segment.

It is found in the cell membrane. Its function is as follows. Toxic component of a type I toxin-antitoxin (TA) system. Overexpression of txpA causes cell lysis; the TxpA protein has been suggested to act on the cell membrane or might possibly block cell wall synthesis. Overexpression in E.coli is not toxic. This is Toxin TxpA from Bacillus subtilis (strain 168).